The following is a 281-amino-acid chain: Leukocyte antigen CD37 (281 aa).

Topologically, residues 1-17 are cytoplasmic; the sequence is MSAQESCLSLIKYFLFV. Residues 18-38 traverse the membrane as a helical segment; the sequence is FNLFFFVLGGLIFCFGTWILI. Over 39–59 the chain is Extracellular; the sequence is DKTSFVSFVGLSFVPLQTWSK. Residues 60–74 form a helical membrane-spanning segment; sequence VLSVSGVLTMALALL. Topologically, residues 75–85 are cytoplasmic; sequence GCVGALKELRC. The chain crosses the membrane as a helical span at residues 86-111; sequence LLGLYFGMLLLLFATQITLGILISTQ. The Extracellular portion of the chain corresponds to 112 to 241; sequence RVRLERRVQE…RSLQKWLHNN (130 aa). Asn-170, Asn-183, and Asn-188 each carry an N-linked (GlcNAc...) asparagine glycan. Residues 242-266 traverse the membrane as a helical segment; it reads IISIVGICLGVGLLELGFMTLSIFL. Topologically, residues 267–281 are cytoplasmic; that stretch reads CRNLDHVYDRLARYR.

It belongs to the tetraspanin (TM4SF) family. Interacts with SCIMP. Interacts with SOCS3. Interacts with DECTIN1/CLEC7A. In terms of processing, tyrosine phosphorylated; leading to activation of downstream signaling pathways. As to expression, B-lymphocytes.

It localises to the cell membrane. Functionally, structural component of specialized membrane microdomains known as tetraspanin-enriched microdomains (TERMs), which act as platforms for receptor clustering and signaling. Participates thereby in diverse biological functions such as cell signal transduction, adhesion, migration and protein trafficking. Upon ligand binding, two signaling pathways are activated, one acting through phosphorylation by LYN leading to cell death or a survival pathway with activation of GSK3B. Plays an essential role essential for clustering of integrin ITGA4/ITGB1 and promotes its mobility in the plasma membrane of B-cells. In turn, participates in ITGA4/ITGB1 integrin-mediated antiapoptotic signaling through AKT. Plays also a role in the migration of dendritic cells and neutrophils to draining lymph nodes, as well as in their integrin-mediated adhesion. Negatively regulates IL-6 responses through direct interaction with SOCS3 thereby preventing constitutive IL-6 signaling. Alternatively, inhibition of IL-6 signaling can also occur via interaction and stabilization of DECTIN1/CLEC7A at the cell membrane to inhibit its ability to promote the production of IL-6. In Rattus norvegicus (Rat), this protein is Leukocyte antigen CD37 (Cd37).